The chain runs to 513 residues: UDP-N-acetylmuramyl-tripeptide synthetase (513 aa).

Ser-38 contacts UDP-N-acetyl-alpha-D-muramoyl-L-alanyl-D-glutamate. 115–121 (GTKGKTT) contacts ATP. Residues 161–162 (TT), Ser-188, and Arg-196 contribute to the UDP-N-acetyl-alpha-D-muramoyl-L-alanyl-D-glutamate site. At Lys-230 the chain carries N6-carboxylysine.

It belongs to the MurCDEF family. MurE subfamily. Post-translationally, carboxylation is probably crucial for Mg(2+) binding and, consequently, for the gamma-phosphate positioning of ATP.

It localises to the cytoplasm. It participates in cell wall biogenesis; peptidoglycan biosynthesis. Catalyzes the addition of an amino acid to the nucleotide precursor UDP-N-acetylmuramoyl-L-alanyl-D-glutamate (UMAG) in the biosynthesis of bacterial cell-wall peptidoglycan. The chain is UDP-N-acetylmuramyl-tripeptide synthetase from Latilactobacillus sakei subsp. sakei (strain 23K) (Lactobacillus sakei subsp. sakei).